A 149-amino-acid chain; its full sequence is Large ribosomal subunit protein uL13 (149 aa).

Belongs to the universal ribosomal protein uL13 family. Part of the 50S ribosomal subunit.

In terms of biological role, this protein is one of the early assembly proteins of the 50S ribosomal subunit, although it is not seen to bind rRNA by itself. It is important during the early stages of 50S assembly. The polypeptide is Large ribosomal subunit protein uL13 (Chlorobium luteolum (strain DSM 273 / BCRC 81028 / 2530) (Pelodictyon luteolum)).